Consider the following 271-residue polypeptide: OX-2 membrane glycoprotein homolog (271 aa).

Positions 1 to 24 (MSSLFISLPWVAFIWLALLGAVGG) are cleaved as a signal peptide. Residues 25–227 (ARVQGPMRGS…QGPLAHDLPA (203 aa)) are Extracellular-facing. Residues 26 to 129 (RVQGPMRGSA…SCTACLEVTS (104 aa)) enclose the Ig-like V-type domain. Cys-39 and Cys-109 are joined by a disulfide. Asn-83, Asn-91, Asn-138, Asn-157, Asn-166, and Asn-208 each carry an N-linked (GlcNAc...) asparagine; by host glycan. In terms of domain architecture, Ig-like C2-type spans 130 to 220 (PPTGHVQVNS…ISIPASIQGP (91 aa)). Cys-148 and Cys-202 are disulfide-bonded. Residues 228–248 (AQGTLAGVAITLVGLFGIFAL) form a helical membrane-spanning segment. Residues 249-271 (HHCRRKQGGASPTSDDMDPLSTQ) are Cytoplasmic-facing.

As to quaternary structure, interacts with human CD200R1. N-glycosylated.

The protein resides in the host cell membrane. Dramatically stimulates primary monocytes, macrophages, and dendritic cells to produce the inflammatory cytokines interleukin 1-beta, IL-6, monocyte chemoattractant protein 1, and TNF-alpha. The induction of inflammatory cytokine production potentially promotes the cytokine-mediated angiogenic proliferation of KSHV-infected cells. In Human herpesvirus 8 type P (isolate GK18) (HHV-8), this protein is OX-2 membrane glycoprotein homolog (K14).